We begin with the raw amino-acid sequence, 1830 residues long: Guanine nucleotide exchange factor SPIKE 1 (1830 aa).

Methionine 1 is subject to N-acetylmethionine. Residues 285-304 form a disordered region; sequence NTGESASPSSPLAPSMTASS. Over residues 289-304 the composition is skewed to low complexity; the sequence is SASPSSPLAPSMTASS. One can recognise a C2 DOCK-type domain in the interval 463-622; it reads FHCLYVYPVA…NIFKLRLRLC (160 aa). Position 1051 is a phosphoserine (serine 1051). A Phosphothreonine modification is found at threonine 1079. Serine 1095 bears the Phosphoserine mark. Positions 1379-1828 constitute a DOCKER domain; the sequence is MAFAPVPDLH…LSHYIPAILS (450 aa).

It belongs to the DOCK family. Homodimer. Component of SCAR/WAVE and ARP2/3 complexes. Interacts directly with ARAC4/ROP2, ARAC1/ROP3, ARAC5/ROP4, ARAC6/ROP5, ARAC8/ROP10, ARAC9/ROP8, SCAR1, SCAR2, SCAR3, SCAR4, ABI1, ABI2, ABI3 and ABI4. Binds to the inactive GDP-bound form of ARAC3/ROP6. In terms of tissue distribution, expressed ubiquitously, in roots and aerial organs.

The protein localises to the cytoplasm. It is found in the endoplasmic reticulum membrane. Its subcellular location is the nucleus. Its function is as follows. Guanine nucleotide exchange factor (GEF) for Rho and Rac. GEF proteins activate small GTPases by exchanging bound GDP for free GTP. Controls actin polymerization via the two heteromeric complexes WAVE and actin-related protein (ARP) 2/3. Involved in cytoskeletal reorganization required for cell shape (e.g. trichome and cotyledon) control and tissue development. Prevents cortical microtubules organization into parallel arrays oriented perpendicular to the axis of cell elongation to limit anisotropic cell growth during petal development, probably by triggering ARAC4/ROP2 and ARAC3/ROP6 activity. Promotes polarized growth and cell-cell adhesion in the leaf epidermis probably by promoting the formation of endoplasmic reticulum (ER) exit site (ERES) and/or trafficking between the ER and Golgi. Triggers ARAC3/ROP6 activation required for auxin-mediated inhibition of PIN2 internalization during gravitropic responses (, PubMed:22683260). This is Guanine nucleotide exchange factor SPIKE 1 from Arabidopsis thaliana (Mouse-ear cress).